The chain runs to 248 residues: tRNA uridine(34) hydroxylase (248 aa).

One can recognise a Rhodanese domain in the interval 124–218 (TKQDVIVVDT…YLEDTQNKNN (95 aa)). The active-site Cysteine persulfide intermediate is cysteine 178.

Belongs to the TrhO family.

The enzyme catalyses uridine(34) in tRNA + AH2 + O2 = 5-hydroxyuridine(34) in tRNA + A + H2O. Functionally, catalyzes oxygen-dependent 5-hydroxyuridine (ho5U) modification at position 34 in tRNAs. The protein is tRNA uridine(34) hydroxylase of Rickettsia bellii (strain OSU 85-389).